The sequence spans 440 residues: Transposon Ty1-BL Gag polyprotein (440 aa).

Polar residues-rich tracts occupy residues 20–31 (SVTSKEVQTTQD), 46–55 (VSTQANSQQP), and 137–168 (VGTH…TNQH). 3 disordered regions span residues 20-84 (SVTS…QNGP), 137-173 (VGTH…RPPP), and 350-424 (QQES…TTEP). Residues 299-401 (NNGIPINNKV…NSQSRTARAH (103 aa)) form an RNA-binding region. Basic and acidic residues predominate over residues 363–372 (SPSDEKKDSR). The segment covering 373 to 411 (TYTNTTKPKSITRNSQKPNNSQSRTARAHNVSTFNNSPG) has biased composition (polar residues).

Homotrimer.

The protein localises to the cytoplasm. Its function is as follows. Capsid protein (CA) is the structural component of the virus-like particle (VLP), forming the shell that encapsulates the retrotransposons dimeric RNA genome. The particles are assembled from trimer-clustered units and there are holes in the capsid shells that allow for the diffusion of macromolecules. CA also has nucleocapsid-like chaperone activity, promoting primer tRNA(i)-Met annealing to the multipartite primer-binding site (PBS), dimerization of Ty1 RNA and initiation of reverse transcription. This chain is Transposon Ty1-BL Gag polyprotein (TY1A-BL), found in Saccharomyces cerevisiae (strain ATCC 204508 / S288c) (Baker's yeast).